Reading from the N-terminus, the 190-residue chain is 6,7-dimethyl-8-ribityllumazine synthase (190 aa).

Residues Phe23, Ser61–Glu63, and Ala85–Ile87 each bind 5-amino-6-(D-ribitylamino)uracil. Residue Gln90–Thr91 participates in (2S)-2-hydroxy-3-oxobutyl phosphate binding. His93 (proton donor) is an active-site residue. Phe118 lines the 5-amino-6-(D-ribitylamino)uracil pocket. A (2S)-2-hydroxy-3-oxobutyl phosphate-binding site is contributed by Arg132.

This sequence belongs to the DMRL synthase family.

The enzyme catalyses (2S)-2-hydroxy-3-oxobutyl phosphate + 5-amino-6-(D-ribitylamino)uracil = 6,7-dimethyl-8-(1-D-ribityl)lumazine + phosphate + 2 H2O + H(+). It functions in the pathway cofactor biosynthesis; riboflavin biosynthesis; riboflavin from 2-hydroxy-3-oxobutyl phosphate and 5-amino-6-(D-ribitylamino)uracil: step 1/2. Its function is as follows. Catalyzes the formation of 6,7-dimethyl-8-ribityllumazine by condensation of 5-amino-6-(D-ribitylamino)uracil with 3,4-dihydroxy-2-butanone 4-phosphate. This is the penultimate step in the biosynthesis of riboflavin. The chain is 6,7-dimethyl-8-ribityllumazine synthase from Trichormus variabilis (strain ATCC 29413 / PCC 7937) (Anabaena variabilis).